Here is a 123-residue protein sequence, read N- to C-terminus: Small ribosomal subunit protein uS12cz/uS12cy (123 aa).

The protein belongs to the universal ribosomal protein uS12 family. Part of the 30S ribosomal subunit.

The protein localises to the plastid. Its subcellular location is the chloroplast. Its function is as follows. With S4 and S5 plays an important role in translational accuracy. Located at the interface of the 30S and 50S subunits. The sequence is that of Small ribosomal subunit protein uS12cz/uS12cy (rps12-A) from Angiopteris evecta (Mule's foot fern).